We begin with the raw amino-acid sequence, 117 residues long: Calcitonin receptor-stimulating peptide 2 (117 aa).

The N-terminal stretch at 1–25 (MGFWKFPPFLVLSILVLYQAGMFHT) is a signal peptide. The propeptide occupies 26–79 (APVRLPLESSFDSATLTEEEVSLLLVAMVKDYVQMKATVLEQESEDFSITAQEK). An intrachain disulfide couples cysteine 81 to cysteine 86.

Belongs to the calcitonin family. In terms of tissue distribution, mainly expressed in the thyroid gland and CNS. Found in the nerve cells of the cerebrum, hippocampus, hypothalamus, pons/midbrain and thalamus. Also detected in the glia-like cells of pons/midbrain and in meninx of tactus opticus.

The protein localises to the secreted. This is Calcitonin receptor-stimulating peptide 2 (CRSP2) from Sus scrofa (Pig).